Reading from the N-terminus, the 274-residue chain is 2,3,4,5-tetrahydropyridine-2,6-dicarboxylate N-succinyltransferase (274 aa).

Substrate is bound by residues R104 and D141.

Belongs to the transferase hexapeptide repeat family. In terms of assembly, homotrimer.

The protein resides in the cytoplasm. The catalysed reaction is (S)-2,3,4,5-tetrahydrodipicolinate + succinyl-CoA + H2O = (S)-2-succinylamino-6-oxoheptanedioate + CoA. The protein operates within amino-acid biosynthesis; L-lysine biosynthesis via DAP pathway; LL-2,6-diaminopimelate from (S)-tetrahydrodipicolinate (succinylase route): step 1/3. The chain is 2,3,4,5-tetrahydropyridine-2,6-dicarboxylate N-succinyltransferase from Salmonella choleraesuis (strain SC-B67).